The following is a 21-amino-acid chain: thr operon leader peptide (21 aa).

Belongs to the thr operon leader peptide family.

Functionally, this protein is involved in control of the biosynthesis of threonine. This chain is thr operon leader peptide, found in Shigella boydii serotype 18 (strain CDC 3083-94 / BS512).